The following is a 470-amino-acid chain: ATP synthase subunit beta (470 aa).

155 to 162 (GGAGVGKT) lines the ATP pocket.

The protein belongs to the ATPase alpha/beta chains family. F-type ATPases have 2 components, CF(1) - the catalytic core - and CF(0) - the membrane proton channel. CF(1) has five subunits: alpha(3), beta(3), gamma(1), delta(1), epsilon(1). CF(0) has three main subunits: a(1), b(2) and c(9-12). The alpha and beta chains form an alternating ring which encloses part of the gamma chain. CF(1) is attached to CF(0) by a central stalk formed by the gamma and epsilon chains, while a peripheral stalk is formed by the delta and b chains.

Its subcellular location is the cell membrane. It catalyses the reaction ATP + H2O + 4 H(+)(in) = ADP + phosphate + 5 H(+)(out). Produces ATP from ADP in the presence of a proton gradient across the membrane. The catalytic sites are hosted primarily by the beta subunits. The chain is ATP synthase subunit beta from Staphylococcus saprophyticus subsp. saprophyticus (strain ATCC 15305 / DSM 20229 / NCIMB 8711 / NCTC 7292 / S-41).